Consider the following 186-residue polypeptide: Phosphoprotein p30 (186 aa).

Belongs to the asfivirus phosphoprotein p30 family. As to quaternary structure, oligomer. Interacts with host HNRNPK.

The protein localises to the host cytoplasm. The protein resides in the host nucleus. It localises to the virion. Its function is as follows. Modifies the subcellular distribution of heterogeneous nuclear ribonucleoprotein K (HNRNPK) and may contribute to modulate HNRNPK functions related to processing and export of mRNAs during ASFV infection. Necessary for virus internalization. This is Phosphoprotein p30 from Ornithodoros (relapsing fever ticks).